Reading from the N-terminus, the 226-residue chain is Protein Thf1 (226 aa).

Positions 183 to 213 (EEKMQKDLDLYRSNLEKMDQLLTVIEEALQA) form a coiled coil.

It belongs to the THF1 family.

Its function is as follows. May be involved in photosynthetic membrane biogenesis. The sequence is that of Protein Thf1 from Gloeothece citriformis (strain PCC 7424) (Cyanothece sp. (strain PCC 7424)).